The following is a 440-amino-acid chain: Nuclear hormone receptor family member nhr-130 (440 aa).

A DNA-binding region (nuclear receptor) is located at residues 34–110; it reads LYTCQVCALP…VGMDPGRFQF (77 aa). 2 NR C4-type zinc fingers span residues 37–57 and 74–93; these read CQVCALPAHGNHFGAISCRAC and CKKQNNCDIWENGRYKCKKC. Residues 184–439 enclose the NR LBD domain; that stretch reads EKPLIARNNL…FSHPEMFEDT (256 aa).

This sequence belongs to the nuclear hormone receptor family.

It is found in the nucleus. In terms of biological role, orphan nuclear receptor. The protein is Nuclear hormone receptor family member nhr-130 (nhr-130) of Caenorhabditis elegans.